The following is a 343-amino-acid chain: E3 ubiquitin-protein ligase RNF113A (343 aa).

Ala-2 carries the N-acetylalanine modification. The interval 2–60 (AEQLSPGKTTDQVCTFLFKKPGRKVAAGRRKRPICNQESGDSSSSSDEGNTVVRPEKKR) is important for interaction with SNRNP200/BRR2. A Phosphoserine modification is found at Ser-6. Residues 23-34 (GRKVAAGRRKRP) show a composition bias toward basic residues. A disordered region spans residues 23-95 (GRKVAAGRRK…EEEEENKSES (73 aa)). Residues 39-50 (ESGDSSSSSDEG) are compositionally biased toward low complexity. The important for interaction with CXCR4 stretch occupies residues 50 to 61 (GNTVVRPEKKRA). Phosphoserine is present on residues Ser-84 and Ser-85. The C3H1-type zinc-finger motif lies at 196 to 224 (DYQPDICKDYKETGFCGFGDSCKFLHDRS). At Ser-253 the chain carries Phosphoserine. The RING-type zinc-finger motif lies at 262–300 (CFICRQTFQNPVVTKCRHYFCESCALQHFRTTPRCYVCD). The tract at residues 323-343 (AEGGGASGFPEDPDEDPVPIT) is disordered. Over residues 333-343 (EDPDEDPVPIT) the composition is skewed to acidic residues.

In terms of assembly, component of pre-catalytic and catalytic spliceosome complexes. Interacts (via N-terminus) with the spliceosome subunit SNRNP200/BRR2. Component of the minor spliceosome. Within this complex, interacts with SCNM1 and CRIPT.

The protein resides in the nucleus. It localises to the nucleus speckle. It catalyses the reaction S-ubiquitinyl-[E2 ubiquitin-conjugating enzyme]-L-cysteine + [acceptor protein]-L-lysine = [E2 ubiquitin-conjugating enzyme]-L-cysteine + N(6)-ubiquitinyl-[acceptor protein]-L-lysine.. The protein operates within protein modification; protein ubiquitination. Required for pre-mRNA splicing as component of the spliceosome. As a component of the minor spliceosome, involved in the splicing of U12-type introns in pre-mRNAs. E3 ubiquitin-protein ligase that catalyzes the transfer of ubiquitin onto target proteins. Catalyzes polyubiquitination of SNRNP200/BRR2 with non-canonical 'Lys-63'-linked polyubiquitin chains. Plays a role in DNA repair via its role in the synthesis of 'Lys-63'-linked polyubiquitin chains that recruit ALKBH3 and the ASCC complex to sites of DNA damage by alkylating agents. Ubiquitinates CXCR4, leading to its degradation, and thereby contributes to the termination of CXCR4 signaling. This chain is E3 ubiquitin-protein ligase RNF113A (RNF113A), found in Bos taurus (Bovine).